The sequence spans 495 residues: Aspartyl/glutamyl-tRNA(Asn/Gln) amidotransferase subunit B (495 aa).

It belongs to the GatB/GatE family. GatB subfamily. In terms of assembly, heterotrimer of A, B and C subunits.

It catalyses the reaction L-glutamyl-tRNA(Gln) + L-glutamine + ATP + H2O = L-glutaminyl-tRNA(Gln) + L-glutamate + ADP + phosphate + H(+). The catalysed reaction is L-aspartyl-tRNA(Asn) + L-glutamine + ATP + H2O = L-asparaginyl-tRNA(Asn) + L-glutamate + ADP + phosphate + 2 H(+). Functionally, allows the formation of correctly charged Asn-tRNA(Asn) or Gln-tRNA(Gln) through the transamidation of misacylated Asp-tRNA(Asn) or Glu-tRNA(Gln) in organisms which lack either or both of asparaginyl-tRNA or glutaminyl-tRNA synthetases. The reaction takes place in the presence of glutamine and ATP through an activated phospho-Asp-tRNA(Asn) or phospho-Glu-tRNA(Gln). This chain is Aspartyl/glutamyl-tRNA(Asn/Gln) amidotransferase subunit B, found in Methanosarcina barkeri (strain Fusaro / DSM 804).